We begin with the raw amino-acid sequence, 226 residues long: Ribose-5-phosphate isomerase A (226 aa).

Residues 25–28, 81–84, and 94–97 contribute to the substrate site; these read TGST, DGAD, and KGGG. The active-site Proton acceptor is Glu103. Residue Lys121 participates in substrate binding.

Belongs to the ribose 5-phosphate isomerase family. As to quaternary structure, homodimer.

It catalyses the reaction aldehydo-D-ribose 5-phosphate = D-ribulose 5-phosphate. Its pathway is carbohydrate degradation; pentose phosphate pathway; D-ribose 5-phosphate from D-ribulose 5-phosphate (non-oxidative stage): step 1/1. Functionally, catalyzes the reversible conversion of ribose-5-phosphate to ribulose 5-phosphate. The sequence is that of Ribose-5-phosphate isomerase A from Enterococcus faecalis (strain ATCC 700802 / V583).